A 283-amino-acid polypeptide reads, in one-letter code: Alkaline ceramidase (283 aa).

The Ca(2+) site is built by D28, W29, E31, N33, and E42. Transmembrane regions (helical) follow at residues 43–63 (FVNTFSNFLFILLPPVLIMLF) and 69–89 (FVTPGIHVIWVLLIVVGLSSM). H92 contributes to the Zn(2+) binding site. Helical transmembrane passes span 98–118 (IGQLLDELAILWVFMAAFSLF), 134–151 (TFSWLMLLSAIAATGLSW), 154–174 (PIVNAFVLMFMSVPTMVMLYT), and 187–209 (LGIRSTTVWAVAVFCWINDRIFC). Residues H221 and H225 each contribute to the Zn(2+) site. The chain crosses the membrane as a helical span at residues 222-242 (GFWHIFIFIAAYTVLVLFAYF).

Belongs to the alkaline ceramidase family. Zn(2+) serves as cofactor. As to expression, expressed in the central midgut of late embryos. In brain, it is present at the interhemispheric junction and in groups of cells in the central brain.

The protein localises to the membrane. The catalysed reaction is an N-acylsphing-4-enine + H2O = sphing-4-enine + a fatty acid. Hydrolyzes the sphingolipid ceramide into sphingosine and free fatty acid. This chain is Alkaline ceramidase (bwa), found in Drosophila melanogaster (Fruit fly).